Consider the following 365-residue polypeptide: 3-dehydroquinate synthase (365 aa).

NAD(+) is bound by residues 69–74 (DGEKYK), 103–107 (GVIGD), 127–128 (TT), K140, and K149. Residues E182, H245, and H262 each coordinate Zn(2+).

It belongs to the sugar phosphate cyclases superfamily. Dehydroquinate synthase family. Requires Co(2+) as cofactor. It depends on Zn(2+) as a cofactor. The cofactor is NAD(+).

The protein resides in the cytoplasm. It catalyses the reaction 7-phospho-2-dehydro-3-deoxy-D-arabino-heptonate = 3-dehydroquinate + phosphate. Its pathway is metabolic intermediate biosynthesis; chorismate biosynthesis; chorismate from D-erythrose 4-phosphate and phosphoenolpyruvate: step 2/7. Its function is as follows. Catalyzes the conversion of 3-deoxy-D-arabino-heptulosonate 7-phosphate (DAHP) to dehydroquinate (DHQ). The sequence is that of 3-dehydroquinate synthase from Pseudomonas entomophila (strain L48).